The following is a 423-amino-acid chain: Glutamate-1-semialdehyde 2,1-aminomutase (423 aa).

At lysine 262 the chain carries N6-(pyridoxal phosphate)lysine.

It belongs to the class-III pyridoxal-phosphate-dependent aminotransferase family. HemL subfamily. Homodimer. Pyridoxal 5'-phosphate serves as cofactor.

It localises to the cytoplasm. It catalyses the reaction (S)-4-amino-5-oxopentanoate = 5-aminolevulinate. The protein operates within porphyrin-containing compound metabolism; protoporphyrin-IX biosynthesis; 5-aminolevulinate from L-glutamyl-tRNA(Glu): step 2/2. This Campylobacter fetus subsp. fetus (strain 82-40) protein is Glutamate-1-semialdehyde 2,1-aminomutase.